The sequence spans 198 residues: Tumor necrosis factor receptor superfamily member 22 (198 aa).

At 1–20 (MFGFFCSLVSSLSRWFLWRR) the chain is on the cytoplasmic side. Residues 21-41 (LLLLLLLLLLNLPLQVKFAML) form a helical; Signal-anchor for type II membrane protein membrane-spanning segment. Residues 42–198 (ELHSFKCPAG…SVVVFRIIRR (157 aa)) lie on the Extracellular side of the membrane. 3 TNFR-Cys repeats span residues 47 to 82 (KCPA…QGQC), 84 to 124 (KCHP…DRKC), and 125 to 165 (QCRT…NTVC). Disulfide bonds link C48-C59, C60-C73, C63-C82, C85-C100, C103-C116, C106-C124, C126-C141, C144-C157, and C147-C165. N-linked (GlcNAc...) asparagine glycosylation occurs at N62. N158 carries N-linked (GlcNAc...) asparagine glycosylation.

Ubiquitous.

The protein localises to the cell membrane. It is found in the secreted. In terms of biological role, receptor for the cytotoxic ligand TNFSF10/TRAIL. Lacks a cytoplasmic death domain and hence is not capable of inducing apoptosis. Protects cells against TRAIL mediated apoptosis possibly through ligand competition. Cannot induce the NF-kappa-B pathway. The chain is Tumor necrosis factor receptor superfamily member 22 (Tnfrsf22) from Mus musculus (Mouse).